The following is a 318-amino-acid chain: Isoeugenol synthase 1 (318 aa).

Residues 10-13 (TGYI), 32-43 (ARPLTPDSTPSS), arginine 33, 84-86 (VPM), 109-111 (SEF), lysine 131, and 151-153 (NCF) contribute to the NADP(+) site. Catalysis depends on lysine 131, which acts as the Proton donor/acceptor. Proline 260 is a substrate binding site.

This sequence belongs to the NmrA-type oxidoreductase family. Mostly expressed in petals, and, to a lower extent, in sepals, stamens and pistils.

It catalyses the reaction (E)-isoeugenol + acetate + NADP(+) = (E)-coniferyl acetate + NADPH. The protein operates within aromatic compound metabolism; phenylpropanoid biosynthesis. Its function is as follows. Catalyzes the synthesis of the phenylpropene isoeugenol from coniferyl acetate. Phenylpropenes are the primary constituents of various essential plant oils. They are produced as antimicrobial and antianimal compounds, or as floral attractants of pollinators. Isoeugenol is a characteristic aromatic constituent of spices and a floral volatile compound. This is Isoeugenol synthase 1 from Clarkia breweri (Fairy fans).